We begin with the raw amino-acid sequence, 659 residues long: Cysteine-rich receptor-like protein kinase 7 (659 aa).

The first 23 residues, 1–23, serve as a signal peptide directing secretion; sequence MSSLFPFIFLFLFSFLTSFRASA. Over 24 to 273 the chain is Extracellular; sequence QDPRFLAYYC…SLSDKSGNSN (250 aa). Gnk2-homologous domains follow at residues 27 to 131 and 142 to 244; these read RFLA…HKNI and FILR…LYDF. 5 N-linked (GlcNAc...) asparagine glycosylation sites follow: Asn35, Asn42, Asn60, Asn69, and Asn103. A glycan (N-linked (GlcNAc...) asparagine) is linked at Asn246. A helical transmembrane segment spans residues 274 to 294; the sequence is VVVVAVVVPIIVAVLIFIAGY. The Cytoplasmic segment spans residues 295–659; sequence CFFAKRAKKT…DKSMSDLDPR (365 aa). Residues 336-622 enclose the Protein kinase domain; the sequence is FSENNKIGRG…ALPAPQQPGF (287 aa). Residues 342 to 350 and Lys364 contribute to the ATP site; that span reads IGRGGFGDV. Tyr409 carries the post-translational modification Phosphotyrosine. Asp461 acts as the Proton acceptor in catalysis. Residue Ser465 is modified to Phosphoserine. Thr501 carries the post-translational modification Phosphothreonine. Tyr509 bears the Phosphotyrosine mark. Residues 626–659 form a disordered region; sequence SRPGTNRLDSDQSTTNKSVTVSIDDKSMSDLDPR. Positions 636–646 are enriched in polar residues; it reads DQSTTNKSVTV. Positions 648 to 659 are enriched in basic and acidic residues; it reads IDDKSMSDLDPR.

It belongs to the protein kinase superfamily. Ser/Thr protein kinase family. CRK subfamily.

The protein localises to the membrane. It catalyses the reaction L-seryl-[protein] + ATP = O-phospho-L-seryl-[protein] + ADP + H(+). The enzyme catalyses L-threonyl-[protein] + ATP = O-phospho-L-threonyl-[protein] + ADP + H(+). This Arabidopsis thaliana (Mouse-ear cress) protein is Cysteine-rich receptor-like protein kinase 7 (CRK7).